Reading from the N-terminus, the 190-residue chain is ATP synthase subunit b (190 aa).

The chain crosses the membrane as a helical span at residues 34–54; the sequence is LDIFETNLINLAILVGILFYF.

It belongs to the ATPase B chain family. F-type ATPases have 2 components, F(1) - the catalytic core - and F(0) - the membrane proton channel. F(1) has five subunits: alpha(3), beta(3), gamma(1), delta(1), epsilon(1). F(0) has four main subunits: a(1), b(1), b'(1) and c(10-14). The alpha and beta chains form an alternating ring which encloses part of the gamma chain. F(1) is attached to F(0) by a central stalk formed by the gamma and epsilon chains, while a peripheral stalk is formed by the delta, b and b' chains.

It localises to the cellular thylakoid membrane. F(1)F(0) ATP synthase produces ATP from ADP in the presence of a proton or sodium gradient. F-type ATPases consist of two structural domains, F(1) containing the extramembraneous catalytic core and F(0) containing the membrane proton channel, linked together by a central stalk and a peripheral stalk. During catalysis, ATP synthesis in the catalytic domain of F(1) is coupled via a rotary mechanism of the central stalk subunits to proton translocation. Its function is as follows. Component of the F(0) channel, it forms part of the peripheral stalk, linking F(1) to F(0). The chain is ATP synthase subunit b from Nostoc punctiforme (strain ATCC 29133 / PCC 73102).